The sequence spans 114 residues: Macrophage migration inhibitory factor homolog (114 aa).

P2 functions as the Proton acceptor; via imino nitrogen in the catalytic mechanism. Substrate contacts are provided by K33 and I65.

This sequence belongs to the MIF family.

It localises to the secreted. It catalyses the reaction L-dopachrome = 5,6-dihydroxyindole-2-carboxylate. The enzyme catalyses 3-phenylpyruvate = enol-phenylpyruvate. Functionally, tautomerization of the methyl ester of L-dopachrome. Inhibits migration of human peripheral blood mononuclear cells. In Trichinella spiralis (Trichina worm), this protein is Macrophage migration inhibitory factor homolog.